A 146-amino-acid polypeptide reads, in one-letter code: DNA utilization protein HofO (146 aa).

A helical transmembrane segment spans residues 20–37; that stretch reads WAFWLLMLVTLIFLSSTH.

Its subcellular location is the cell inner membrane. Required for the use of extracellular DNA as a nutrient. The polypeptide is DNA utilization protein HofO (hofO) (Escherichia coli (strain K12)).